A 487-amino-acid chain; its full sequence is Argininosuccinate lyase (487 aa).

It belongs to the lyase 1 family. Argininosuccinate lyase subfamily.

The protein localises to the cytoplasm. The enzyme catalyses 2-(N(omega)-L-arginino)succinate = fumarate + L-arginine. It participates in amino-acid biosynthesis; L-arginine biosynthesis; L-arginine from L-ornithine and carbamoyl phosphate: step 3/3. The sequence is that of Argininosuccinate lyase from Natranaerobius thermophilus (strain ATCC BAA-1301 / DSM 18059 / JW/NM-WN-LF).